Here is a 159-residue protein sequence, read N- to C-terminus: ATP synthase subunit b (159 aa).

The chain crosses the membrane as a helical span at residues 2-22; that stretch reads NISIPQIIAAILNFIILLLIV.

It belongs to the ATPase B chain family. As to quaternary structure, F-type ATPases have 2 components, F(1) - the catalytic core - and F(0) - the membrane proton channel. F(1) has five subunits: alpha(3), beta(3), gamma(1), delta(1), epsilon(1). F(0) has three main subunits: a(1), b(2) and c(10-14). The alpha and beta chains form an alternating ring which encloses part of the gamma chain. F(1) is attached to F(0) by a central stalk formed by the gamma and epsilon chains, while a peripheral stalk is formed by the delta and b chains.

The protein localises to the cell membrane. In terms of biological role, f(1)F(0) ATP synthase produces ATP from ADP in the presence of a proton or sodium gradient. F-type ATPases consist of two structural domains, F(1) containing the extramembraneous catalytic core and F(0) containing the membrane proton channel, linked together by a central stalk and a peripheral stalk. During catalysis, ATP synthesis in the catalytic domain of F(1) is coupled via a rotary mechanism of the central stalk subunits to proton translocation. Functionally, component of the F(0) channel, it forms part of the peripheral stalk, linking F(1) to F(0). The polypeptide is ATP synthase subunit b (Clostridium botulinum (strain Okra / Type B1)).